The chain runs to 241 residues: Dihydropteridine reductase (241 aa).

Position 11–35 (11–35 (LVYGGRGALGSRCVQAFRARNWWVA)) interacts with NADP(+). Residues lysine 70, lysine 76, lysine 93, and lysine 99 each carry the N6-succinyllysine modification. Tyrosine 147 serves as the catalytic Proton acceptor. Serine 170 carries the phosphoserine modification.

It belongs to the short-chain dehydrogenases/reductases (SDR) family. Homodimer.

The enzyme catalyses 5,6,7,8-tetrahydropteridine + NAD(+) = 6,7-dihydropteridine + NADH + H(+). It carries out the reaction 5,6,7,8-tetrahydropteridine + NADP(+) = 6,7-dihydropteridine + NADPH + H(+). Catalyzes the conversion of quinonoid dihydrobiopterin into tetrahydrobiopterin. The chain is Dihydropteridine reductase (Qdpr) from Rattus norvegicus (Rat).